A 132-amino-acid chain; its full sequence is Agouti-related protein (132 aa).

A signal peptide spans 1-20 (MLTAAVLSCALLLALPATRG). Residues 21-82 (AQMGLAPMEG…VLDLQDREPR (62 aa)) constitute a propeptide that is removed on maturation. Cystine bridges form between C87–C102, C94–C108, C101–C119, C105–C129, and C110–C117. Positions 87–129 (CVRLHESCLGQQVPCCDPCATCYCRFFNAFCYCRKLGTAMNPC) constitute an Agouti domain. Residues 111–113 (RFF) form an interaction with melanocortin receptors region.

As to quaternary structure, interacts with melanocortin receptors MC3R, MC4R and MC5R. As to expression, expressed primarily in the adrenal gland, subthalamic nucleus, and hypothalamus, with a lower level of expression occurring in testis, lung, and kidney.

Its subcellular location is the secreted. It localises to the golgi apparatus lumen. Its function is as follows. Plays a role in weight homeostasis. Involved in the control of feeding behavior through the central melanocortin system. Acts as alpha melanocyte-stimulating hormone antagonist by inhibiting cAMP production mediated by stimulation of melanocortin receptors within the hypothalamus and adrenal gland. Has very low activity with MC5R. Is an inverse agonist for MC3R and MC4R being able to suppress their constitutive activity. It promotes MC3R and MC4R endocytosis in an arrestin-dependent manner. The chain is Agouti-related protein (AGRP) from Homo sapiens (Human).